Reading from the N-terminus, the 206-residue chain is Fibroblast growth factor 4 (206 aa).

The N-terminal stretch at 1-29 is a signal peptide; it reads MAGPGTAAAALLPAVLLAVLAPWAGRGGA.

The protein belongs to the heparin-binding growth factors family. Interacts with FGFR1, FGFR2, FGFR3 and FGFR4. Affinity between fibroblast growth factors (FGFs) and their receptors is increased by heparan sulfate glycosaminoglycans that function as coreceptors.

It localises to the secreted. Functionally, plays an important role in the regulation of embryonic development, cell proliferation, and cell differentiation. Required for normal limb and cardiac valve development during embryogenesis. May play a role in embryonic molar tooth bud development via inducing the expression of MSX1, MSX2 and MSX1-mediated expression of SDC1 in dental mesenchyme cells. The protein is Fibroblast growth factor 4 of Bos taurus (Bovine).